Consider the following 514-residue polypeptide: MSVSKKPMVLVILDGYGYREEQQDNAIFSAKTPVMDALWANRPHTLIDASGLEVGLPDRQMGNSEVGHVNLGAGRIVYQDLTRLDVEIKDRAFFANPVLTGAVDKAKNAGKAVHIMGLLSAGGVHSHEDHIMAMVELAAERGAEKIYLHAFLDGRDTPPRSAESSLKKFEEKFAALGKGRVASIIGRYYAMDRDNRWDRVEKAYDLLTLAQGEFQADTAVAGLQAAYARDENDEFVKATVIRAEGQPDAAMEDGDALIFMNFRADRAREITRAFVNADFDGFARKKVVNVDFVMLTEYAADIKTAVAYPPASLVNTFGEWMAKNDKTQLRISETEKYAHVTFFFNGGVEESFKGEDRILINSPKVATYDLQPEMSSAELTEKLVAAIKSGKYDTIICNYPNGDMVGHTGVMEAAVKAVEALDHCVEEVAKAVESVGGQLLITADHGNAEQMRDPATGQAHTAHTNLPVPLIYVGDKNVKAVEGGKLSDIAPTMLSLMGMEIPQEMTGKPLFIVE.

Aspartate 14 and serine 64 together coordinate Mn(2+). The Phosphoserine intermediate role is filled by serine 64. Residues histidine 125, 155–156, arginine 187, arginine 193, 263–266, and lysine 336 contribute to the substrate site; these read RD and RADR. Mn(2+) contacts are provided by aspartate 403, histidine 407, aspartate 444, histidine 445, and histidine 463.

Belongs to the BPG-independent phosphoglycerate mutase family. As to quaternary structure, monomer. Mn(2+) serves as cofactor.

The catalysed reaction is (2R)-2-phosphoglycerate = (2R)-3-phosphoglycerate. The protein operates within carbohydrate degradation; glycolysis; pyruvate from D-glyceraldehyde 3-phosphate: step 3/5. Functionally, catalyzes the interconversion of 2-phosphoglycerate and 3-phosphoglycerate. This Escherichia coli O1:K1 / APEC protein is 2,3-bisphosphoglycerate-independent phosphoglycerate mutase.